The primary structure comprises 261 residues: Aminoglycoside N(3)-acetyltransferase IV (261 aa).

Belongs to the antibiotic N-acetyltransferase family.

The enzyme catalyses a 2-deoxystreptamine antibiotic + acetyl-CoA = an N(3)-acetyl-2-deoxystreptamine antibiotic + CoA + H(+). In terms of biological role, resistance to antibiotics containing the 2-deoxy-streptamine ring including gentamicin, kanamycin, tobramycin, neomycin and apramycin. The protein is Aminoglycoside N(3)-acetyltransferase IV (aacC4) of Salmonella sp.